The chain runs to 340 residues: L-threonine 3-dehydrogenase (340 aa).

Cysteine 38 lines the Zn(2+) pocket. Active-site charge relay system residues include threonine 40 and histidine 43. 6 residues coordinate Zn(2+): histidine 63, glutamate 64, cysteine 93, cysteine 96, cysteine 99, and cysteine 107. NAD(+) is bound by residues isoleucine 175, aspartate 195, arginine 200, 261 to 263 (LGI), and 285 to 286 (IY).

This sequence belongs to the zinc-containing alcohol dehydrogenase family. As to quaternary structure, homotetramer. Zn(2+) serves as cofactor.

The protein resides in the cytoplasm. It catalyses the reaction L-threonine + NAD(+) = (2S)-2-amino-3-oxobutanoate + NADH + H(+). Its pathway is amino-acid degradation; L-threonine degradation via oxydo-reductase pathway; glycine from L-threonine: step 1/2. In terms of biological role, catalyzes the NAD(+)-dependent oxidation of L-threonine to 2-amino-3-ketobutyrate. This is L-threonine 3-dehydrogenase from Stenotrophomonas maltophilia (strain K279a).